A 171-amino-acid chain; its full sequence is Small ribosomal subunit protein uS5 (171 aa).

The 64-residue stretch at 14 to 77 (LKEKLVMVNR…EKAKKKLLKI (64 aa)) folds into the S5 DRBM domain.

Belongs to the universal ribosomal protein uS5 family. Part of the 30S ribosomal subunit. Contacts proteins S4 and S8.

Its function is as follows. With S4 and S12 plays an important role in translational accuracy. Located at the back of the 30S subunit body where it stabilizes the conformation of the head with respect to the body. The polypeptide is Small ribosomal subunit protein uS5 (Karelsulcia muelleri (strain GWSS) (Sulcia muelleri)).